The chain runs to 803 residues: Leucine--tRNA ligase (803 aa).

The short motif at Pro-40 to His-51 is the 'HIGH' region element. The 'KMSKS' region motif lies at Lys-575–Ser-579. ATP is bound at residue Lys-578.

It belongs to the class-I aminoacyl-tRNA synthetase family.

The protein resides in the cytoplasm. It carries out the reaction tRNA(Leu) + L-leucine + ATP = L-leucyl-tRNA(Leu) + AMP + diphosphate. The chain is Leucine--tRNA ligase from Listeria monocytogenes serotype 4b (strain F2365).